Reading from the N-terminus, the 103-residue chain is UPF0102 protein aq_041 (103 aa).

The protein belongs to the UPF0102 family.

This Aquifex aeolicus (strain VF5) protein is UPF0102 protein aq_041.